The following is a 523-amino-acid chain: 2-isopropylmalate synthase (523 aa).

Positions 12–274 (VVIFDTTLRD…WNKIDTTQLT (263 aa)) constitute a Pyruvate carboxyltransferase domain. Residues aspartate 21, histidine 209, histidine 211, and asparagine 245 each coordinate Mn(2+). Residues 398 to 523 (KLLSLSVIAG…AQGAAAAAAS (126 aa)) form a regulatory domain region.

It belongs to the alpha-IPM synthase/homocitrate synthase family. LeuA type 1 subfamily. In terms of assembly, homodimer. The cofactor is Mn(2+).

It localises to the cytoplasm. It catalyses the reaction 3-methyl-2-oxobutanoate + acetyl-CoA + H2O = (2S)-2-isopropylmalate + CoA + H(+). It participates in amino-acid biosynthesis; L-leucine biosynthesis; L-leucine from 3-methyl-2-oxobutanoate: step 1/4. In terms of biological role, catalyzes the condensation of the acetyl group of acetyl-CoA with 3-methyl-2-oxobutanoate (2-ketoisovalerate) to form 3-carboxy-3-hydroxy-4-methylpentanoate (2-isopropylmalate). This chain is 2-isopropylmalate synthase, found in Bradyrhizobium sp. (strain BTAi1 / ATCC BAA-1182).